Here is a 205-residue protein sequence, read N- to C-terminus: Ribonuclease HII (205 aa).

An RNase H type-2 domain is found at 14–201 (EIVAGVDEAG…KGNINHSAIL (188 aa)). Positions 20, 21, and 111 each coordinate a divalent metal cation.

It belongs to the RNase HII family. The cofactor is Mn(2+). It depends on Mg(2+) as a cofactor.

Its subcellular location is the cytoplasm. It carries out the reaction Endonucleolytic cleavage to 5'-phosphomonoester.. Its function is as follows. Endonuclease that specifically degrades the RNA of RNA-DNA hybrids. The sequence is that of Ribonuclease HII from Orientia tsutsugamushi (strain Boryong) (Rickettsia tsutsugamushi).